A 178-amino-acid polypeptide reads, in one-letter code: Probable chorismate pyruvate-lyase (178 aa).

Substrate is bound by residues M37, R78, L114, and E165.

The protein belongs to the UbiC family.

The protein resides in the cytoplasm. It carries out the reaction chorismate = 4-hydroxybenzoate + pyruvate. It participates in cofactor biosynthesis; ubiquinone biosynthesis. Functionally, removes the pyruvyl group from chorismate, with concomitant aromatization of the ring, to provide 4-hydroxybenzoate (4HB) for the ubiquinone pathway. The polypeptide is Probable chorismate pyruvate-lyase (Aeromonas salmonicida (strain A449)).